Here is a 1324-residue protein sequence, read N- to C-terminus: MSLNTSSNATPGDTQRLKNASLDVKQMLKNETESDIIADLRKKLHRAKKEKLEMTTKHNAELSSYESQIARLRSEVEKGEALRQRLEYDLAVARKEAGLGRRAAEERLAEAQRIQERLCAQNSELQGKANEIEKTFQISQEKWREECRRFEHDLEERDNIIQNCNQEYESLMQEKTRLQKTLQEILEKHEQEKTELESRVRETALGEFRLQTEEWEAERRELQLIVQEQDSAVQSMQKKVEQLEAEHMDCSDLLRRQTSELEFSTQREERLRKEFEATTLRVRKLEENIEAERAAHLESKFNSEIIQLRIRDLEGALQVEKASQAEAVADLEMIKNEFKEVESAYEREKQNTQESCAKLNLLEREYFSQNKKLNEEIEDQKKVIIDLSKRLQYNEKSCGELQEELVMAKKHQAFLVETCENNVRELESILGSFSVSAQWTSGVHKDKDKPPSFSVVLETLRRTLTDYQNKLEDASNEEKTSNELDSTKQKIETHIKNTKELQDKLTEVHKELSHLRAKCADREALITSLKVELQNVLHCWEKEKACAAQCESELQKLSQAFQKDSEEKLTFLHTLYQHLVAGCVLIKQPEGMLDKFSWSELCAVLQENVDALIADLNRANEKISHLEYICKNKSDTMRELQQTQEDTFNKVAEQIKAQESCWQKQKKELEFQYSELLLEVQRRAQKFQEIAEKNSEKLNRIETSHEQLVRENSHFKTTLSRTQREQTCLLAACALMAGALCPLYSRSCALSTQRDFLQEQVNSLELFKLEIRTLAQALSAVDEKKQEEAKTKKKTFKGLVRVFRKGVIAILAANRLKLLGQSCAFLFTWMESCKEGIGMLVCTGEPKDKRQFPKHQREQLRCLQALAWLTSSDLLGTVISSMTELQEVISKTDPNSRICGHLLIGAAKNSFAKLMDKLSSAMASIPLHSSRSITYVEKDSLVQRLARGLHKVNTLALKYGLCSHIPIMKSTAALQKQIFGFTQRLHAAEVERRSLRLEVTEYKRTVHEMKKELDKSQSLQTQLNEFKHSKLITHEKFESACEELNNALLREQQAQMLLNEQAQQLQELNYRLELHSSEEADKNQTLGEAVKSLSEAKMELRRKDQSLRQLNRHLTQLEQDKRRLEENIRDAESALRMAAKDKECVANHMRTIENMLHKVRDQISLSRTAATRNDFTLQLPKLHLETFAMEGLQGGPEVVACQAMIKSFMDVYQLASARISTLEKEMTSHRSHIATLKSELHTACLRENESLQSMGSRDHSNLSVPSRAAAPMDTVGDLLPLQAELDTTYTFLKETFVNTAPHSLSSQSSPGVPTNAKRPSQIGL.

Coiled-coil stretches lie at residues 29–296, 325–393, 453–521, 599–712, and 981–1145; these read KNET…RAAH, AEAV…RLQY, FSVV…KCAD, SELC…VREN, and FTQR…KECV. Over residues 1301–1312 the composition is skewed to polar residues; sequence PHSLSSQSSPGV. The tract at residues 1301–1324 is disordered; sequence PHSLSSQSSPGVPTNAKRPSQIGL.

This is Coiled-coil domain-containing protein 171 (Ccdc171) from Mus musculus (Mouse).